The sequence spans 376 residues: Chaperone protein DnaJ (376 aa).

The 66-residue stretch at 5–70 (DYYETLGVQK…EKRAAYDQYG (66 aa)) folds into the J domain. The CR-type zinc finger occupies 133–211 (GTTKDIKINT…CHGDGRVHKK (79 aa)). Positions 146, 149, 163, 166, 185, 188, 199, and 202 each coordinate Zn(2+). 4 CXXCXGXG motif repeats span residues 146–153 (CDHCDGSG), 163–170 (CPTCHGHG), 185–192 (CPTCQGSG), and 199–206 (CKHCHGDG).

This sequence belongs to the DnaJ family. As to quaternary structure, homodimer. Zn(2+) is required as a cofactor.

It localises to the cytoplasm. Functionally, participates actively in the response to hyperosmotic and heat shock by preventing the aggregation of stress-denatured proteins and by disaggregating proteins, also in an autonomous, DnaK-independent fashion. Unfolded proteins bind initially to DnaJ; upon interaction with the DnaJ-bound protein, DnaK hydrolyzes its bound ATP, resulting in the formation of a stable complex. GrpE releases ADP from DnaK; ATP binding to DnaK triggers the release of the substrate protein, thus completing the reaction cycle. Several rounds of ATP-dependent interactions between DnaJ, DnaK and GrpE are required for fully efficient folding. Also involved, together with DnaK and GrpE, in the DNA replication of plasmids through activation of initiation proteins. The chain is Chaperone protein DnaJ from Mannheimia succiniciproducens (strain KCTC 0769BP / MBEL55E).